Consider the following 249-residue polypeptide: Chromosome-partitioning ATPase Soj (249 aa).

10 residues coordinate ATP: K15, G16, G17, V18, G19, K20, T21, T22, P207, and N209. G17 serves as a coordination point for ADP. Positions 19, 20, 21, 22, 207, and 209 each coordinate ADP. Position 21 (T21) interacts with Mg(2+).

This sequence belongs to the ParA family. In terms of assembly, monomer in the absence of nucleotides or presence of ADP, in the presence of ATP is found in a monomer-dimer equilibrium. ATP-binding is required for DNA-binding. Probably interacts with Spo0J.

The catalysed reaction is ATP + H2O = ADP + phosphate + H(+). With respect to regulation, ATPase activity is stimulated 10-fold in the presence of Spo0J and parS DNA (a plasmid centromere-like site or plasmid DNA itself). The first 20 residues of Spo0J stimulate its ATPase activity by 8%. In terms of biological role, ATPase probably involved in chromosome partitioning. Cooperatively binds dsDNA, forming nucleoprotein filaments in a strictly ATP-dependent fashion. Can also bind ssDNA with lower affinity. The protein is Chromosome-partitioning ATPase Soj of Thermus thermophilus (strain ATCC BAA-163 / DSM 7039 / HB27).